A 139-amino-acid chain; its full sequence is Peptide methionine sulfoxide reductase MsrB (139 aa).

A MsrB domain is found at 8–130 (DREWQRELSP…NSASLQLKTQ (123 aa)). Residues Cys47, Cys50, Cys96, and Cys99 each coordinate Zn(2+). Cys119 (nucleophile) is an active-site residue.

It belongs to the MsrB Met sulfoxide reductase family. Requires Zn(2+) as cofactor.

The enzyme catalyses L-methionyl-[protein] + [thioredoxin]-disulfide + H2O = L-methionyl-(R)-S-oxide-[protein] + [thioredoxin]-dithiol. In Acinetobacter baumannii (strain AB307-0294), this protein is Peptide methionine sulfoxide reductase MsrB.